Consider the following 101-residue polypeptide: Small ribosomal subunit protein bS18c (101 aa).

This sequence belongs to the bacterial ribosomal protein bS18 family. In terms of assembly, part of the 30S ribosomal subunit.

The protein resides in the plastid. The protein localises to the chloroplast. The sequence is that of Small ribosomal subunit protein bS18c from Eucalyptus globulus subsp. globulus (Tasmanian blue gum).